Reading from the N-terminus, the 442-residue chain is FBD-associated F-box protein At1g66310 (442 aa).

The F-box domain occupies 18-64 (VDWLRDLPESLLCHILLNLPTKDVVKTSVLSSKWRNLWRLVPGLDLD). The FBD domain occupies 363-415 (KRRTSVLSGPRRLLSSLEYVEIESPLTGEVFEMKLVSYLLENSPILKKLTINL).

In Arabidopsis thaliana (Mouse-ear cress), this protein is FBD-associated F-box protein At1g66310.